Reading from the N-terminus, the 649-residue chain is Forkhead box protein O1 (649 aa).

Disordered stretches follow at residues 1–62 and 112–151; these read MAEA…ASAS and VHSAPPQPPPTGPLSQPPPVPPAAAGPLAGQPRKTSSSRR. At Thr24 the chain carries Phosphothreonine; by PKB/AKT1 or PKB/AKT2 and SGK1. A compositionally biased stretch (low complexity) spans 33-62; that stretch reads NQSNSTTSSPAPSGSTAANPDATASLASAS. A compositionally biased stretch (pro residues) spans 116 to 135; sequence PPQPPPTGPLSQPPPVPPAA. Positions 154–248 form a DNA-binding region, fork-head; it reads WGNLSYADLI…KSGKSPRRRA (95 aa). 2 DNA-binding regions span residues 205 to 212 and 228 to 231; these read NSIRHNLS and SSWW. Position 206 is a phosphoserine; by STK4/MST1 (Ser206). Phosphoserine occurs at positions 212, 228, and 229. A disordered region spans residues 228 to 339; sequence SSWWMLNPEG…DDLGDGDVHS (112 aa). Lys239 and Lys242 each carry N6-acetyllysine. A Phosphoserine; by CDK1 modification is found at Ser243. Omega-N-methylarginine; by PRMT1 occurs at positions 245 and 247. The Nuclear localization signal motif lies at 245-247; it reads RRR. Residue Ser250 is modified to Phosphoserine; by PKB/AKT1 and SGK1. Residues Lys256, Lys259, and Lys268 each carry the N6-acetyllysine modification. Residues 258–269 are compositionally biased toward basic residues; that stretch reads AKSRGRAAKKKA. The segment at 277–557 is sufficient for interaction with NLK; the sequence is GPGDSPGSQF…RLTPVKTPLQ (281 aa). Ser281 and Ser292 each carry phosphoserine. The span at 303 to 320 shows a compositional bias: polar residues; the sequence is NWSTFRPRTSSNASTISG. At Ser313 the chain carries Phosphoserine; by PKB/AKT1. Ser316 bears the Phosphoserine; by CK1 and SGK1 mark. Ser319 is modified (phosphoserine; by CK1). Ser323 is subject to Phosphoserine. Thr327 is modified (phosphothreonine). The interval 357–453 is required for interaction with RUNX2; it reads SEISNPENME…GGLNQYNCAP (97 aa). An N6-acetyllysine modification is found at Lys417. The Required for interaction with SIRT1 signature appears at 456–460; the sequence is LKELL.

Interacts with LRPPRC. Interacts with RUNX2; the interaction inhibits RUNX2 transcriptional activity and mediates the IGF1/insulin-dependent BGLAP expression in osteoblasts Interacts with PPP2R1A; the interaction regulates the dephosphorylation of FOXO1 at Thr-24 and Ser-250 leading to its nuclear import. Interacts with NLK. Interacts with SIRT1; the interaction results in the deacetylation of FOXO1 leading to activation of FOXO1-mediated transcription of genes involved in DNA repair and stress resistance. Binds to CDK1. Interacts with the 14-3-3 proteins, YWHAG and YWHAZ; the interactions require insulin-stimulated phosphorylation on Thr-24, promote nuclear exit and loss of transcriptional activity. Interacts with SKP2; the interaction ubiquitinates FOXO1 leading to its proteasomal degradation. The interaction requires the presence of KRIT1. Interacts (via the C-terminal half) with ATF4 (via its DNA binding domain); the interaction occurs in osteoblasts, regulates glucose homeostasis via suppression of beta-cell proliferation and subsequent decrease in insulin production. Interacts with PRMT1; the interaction methylates FOXO1, prevents PKB/AKT1 phosphorylation and retains FOXO1 in the nucleus. Interacts with EP300 and CREBBP; the interactions acetylate FOXO1. Interacts with SIRT2; the interaction is disrupted in response to oxidative stress or serum deprivation, leading to increased level of acetylated FOXO1, which promotes stress-induced autophagy by stimulating E1-like activating enzyme ATG7. Interacts (acetylated form) with ATG7; the interaction is increased in response to oxidative stress or serum deprivation and promotes the autophagic process leading to cell death. Interacts (acetylated form) with PPARG. Interacts with XBP1; this interaction is direct and leads to FOXO1 ubiquitination and degradation via the proteasome pathway. Interacts (via the Fork-head domain) with CEBPA; the interaction increases when FOXO1 is deacetylated. Interacts with WDFY2. Forms a complex with WDFY2 and AKT1. Interacts with CRY1. Interacts with PPIA/CYPA; the interaction promotes FOXO1 dephosphorylation, nuclear accumulation and transcriptional activity. Interacts with TOX4; FOXO1 is required for full induction of TOX4-dependent activity and the interaction is inhibited by insulin. Interacts (when phosphorylated on Ser-250) with STUB1/CHIP. Post-translationally, phosphorylation by NLK promotes nuclear export and inhibits the transcriptional activity. In response to growth factors, phosphorylation on Thr-24, Ser-250 and Ser-313 by PKB/AKT1 promotes nuclear export and inactivation of transactivational activity. Phosphorylation on Thr-24 is required for binding 14-3-3 proteins. Phosphorylation of Ser-250 decreases DNA-binding activity and promotes the phosphorylation of Thr-24 and Ser-313, permitting phosphorylation of Ser-316 and Ser-319, probably by CDK1, leading to nuclear exclusion and loss of function. Stress signals, such as response to oxygen or nitric oxide, attenuate the PKB/AKT1-mediated phosphorylation leading to nuclear retention. Phosphorylation of Ser-323 is independent of IGF1 and leads to reduced function. Dephosphorylated on Thr-24 and Ser-250 by PP2A in beta-cells under oxidative stress leading to nuclear retention. Phosphorylation of Ser-243 by CDK1 disrupts binding of 14-3-3 proteins leading to nuclear accumulation and has no effect on DNA binding nor transcriptional activity. Phosphorylation by STK4/MST1 on Ser-206, upon oxidative stress, inhibits binding to 14-3-3 proteins and nuclear export. PPIA/CYPA promotes its dephosphorylation on Ser-250. In terms of processing, ubiquitinated by SKP2. Ubiquitination leads to proteasomal degradation. Ubiquitinated by STUB1/CHIP; when Ser-250 is phosphorylated. Methylation inhibits AKT1-mediated phosphorylation at Ser-250 and is increased by oxidative stress. Post-translationally, acetylated. Acetylation at Lys-256 and Lys-268 are necessary for autophagic cell death induction. Deacetylated by SIRT2 in response to oxidative stress or serum deprivation, thereby negatively regulating FOXO1-mediated autophagic cell death. Once in the nucleus, acetylated by CREBBP/EP300. Acetylation diminishes the interaction with target DNA and attenuates the transcriptional activity. It increases the phosphorylation at Ser-250. Deacetylation by SIRT1 results in reactivation of the transcriptional activity. Oxidative stress by hydrogen peroxide treatment appears to promote deacetylation and uncoupling of insulin-induced phosphorylation. By contrast, resveratrol acts independently of acetylation. Acetylated at Lys-417, promoting its localization to the nucleus and transcription factor activity. Deacetylation at Lys-417 by SIRT6, promotes its translocation into the cytoplasm, preventing its transcription factor activity. Deacetylation and subsequent inhibition by SIRT6 has different effects depending on cell types: it inhibits gluconeogenesis in hepatocytes, promotes glucose sensing in pancreatic beta-cells and regulates lipid catabolism in brown adipocytes. In terms of tissue distribution, expressed in the internal elastic lamina of the carotid artery (at protein level).

It localises to the cytoplasm. The protein localises to the nucleus. Its function is as follows. Transcription factor that is the main target of insulin signaling and regulates metabolic homeostasis in response to oxidative stress. Binds to the insulin response element (IRE) with consensus sequence 5'-TT[G/A]TTTTG-3' and the related Daf-16 family binding element (DBE) with consensus sequence 5'-TT[G/A]TTTAC-3'. Activity suppressed by insulin. Main regulator of redox balance and osteoblast numbers and controls bone mass. Orchestrates the endocrine function of the skeleton in regulating glucose metabolism. Also acts as a key regulator of chondrogenic commitment of skeletal progenitor cells in response to lipid availability: when lipids levels are low, translocates to the nucleus and promotes expression of SOX9, which induces chondrogenic commitment and suppresses fatty acid oxidation. Acts synergistically with ATF4 to suppress osteocalcin/BGLAP activity, increasing glucose levels and triggering glucose intolerance and insulin insensitivity. Also suppresses the transcriptional activity of RUNX2, an upstream activator of osteocalcin/BGLAP. Acts as an inhibitor of glucose sensing in pancreatic beta cells by acting as a transcription repressor and suppressing expression of PDX1. In hepatocytes, promotes gluconeogenesis by acting together with PPARGC1A and CEBPA to activate the expression of genes such as IGFBP1, G6PC1 and PCK1. Also promotes gluconeogenesis by directly promoting expression of PPARGC1A and G6PC1. Important regulator of cell death acting downstream of CDK1, PKB/AKT1 and STK4/MST1. Promotes neural cell death. Mediates insulin action on adipose tissue. Regulates the expression of adipogenic genes such as PPARG during preadipocyte differentiation and, adipocyte size and adipose tissue-specific gene expression in response to excessive calorie intake. Regulates the transcriptional activity of GADD45A and repair of nitric oxide-damaged DNA in beta-cells. Required for the autophagic cell death induction in response to starvation or oxidative stress in a transcription-independent manner. Mediates the function of MLIP in cardiomyocytes hypertrophy and cardiac remodeling. Positive regulator of apoptosis in cardiac smooth muscle cells as a result of its transcriptional activation of pro-apoptotic genes. Regulates endothelial cell (EC) viability and apoptosis in a PPIA/CYPA-dependent manner via transcription of CCL2 and BCL2L11 which are involved in EC chemotaxis and apoptosis. The sequence is that of Forkhead box protein O1 (Foxo1) from Rattus norvegicus (Rat).